We begin with the raw amino-acid sequence, 452 residues long: Gamma conglutin 1 (452 aa).

Residues 1–33 (MAKNMAPILHILVISLSYSFLFVTSSSQNSQSL) form the signal peptide. One can recognise a Peptidase A1 domain in the interval 61 to 432 (HWGNILKRTP…DLARSRVGFN (372 aa)). Disulfide bonds link Cys-89–Cys-179, Cys-103–Cys-116, Cys-108–Cys-134, Cys-119–Cys-129, and Cys-353–Cys-394. Asn-131 carries N-linked (GlcNAc...) asparagine glycosylation.

This sequence belongs to the peptidase A1 family. In terms of assembly, two-subunit monomeric unit made of alpha and beta subunits coupled by disulfide bonds (at pH 4.5 and under non-reducing conditions). Monomeric alpha and beta subunits in reducing conditions. Can also form oligomers including dimer, tetramer and cyclic hexamer (trimer of dimers) (at pH &gt; 5.5). Component of globulins complexes which accumulate in seeds. Interacts with flavonoids (e.g. apigenin glucosides) present in globulins complexes. In terms of processing, glycosylated on alpha chain at Asn-131; identified N-glycans bound are Man(2)(Xyl)(Fuc)GlcNAc(2), Man(3)(Xyl)(Fuc)GlcNAc(2), GlcNAcMan(3)(Xyl)(Fuc)GlcNAc(2) and GlcNAc(2)Man(3)(Xyl)(Fuc)GlcNAc(2). Expressed in developing seeds and in the young roots and cotyledons of germinating seeds and young seedlings.

It is found in the secreted. Its subcellular location is the extracellular space. Functionally, sulfur-rich seed storage protein that remains undegraded at germination. The uncleaved form exhibits some inhibitory activity against GH11 xylanase from T.longibrachiatum, more at pH 7 than at pH 5.3, but not against GH12 xyloglucan-specific endoglucanase (XEG) from A.aculeatus. Binds to model phospholipid membranes containing dimyristoyl phosphatidylglycerol (DMPG), dioleoyl phosphatidic acid (DOPA) or mixture of dimyristoyl phosphatidylcholine and dimyristoyl phosphatidylglycerol (DMPC:DMPG), or mixture of dioleoyl phosphatidic acid and dioleoyl phosphatidylcholine (DOPC:DOPA). This Lupinus albus (White lupine) protein is Gamma conglutin 1.